The chain runs to 91 residues: Small ribosomal subunit protein uS19 (91 aa).

The interval 72–91 is disordered; that stretch reads GEFSPTRTYTGHGSEKGKKK.

The protein belongs to the universal ribosomal protein uS19 family.

Protein S19 forms a complex with S13 that binds strongly to the 16S ribosomal RNA. The polypeptide is Small ribosomal subunit protein uS19 (Mycoplasma mobile (strain ATCC 43663 / 163K / NCTC 11711) (Mesomycoplasma mobile)).